The primary structure comprises 276 residues: tRNA (guanine-N(7)-)-methyltransferase (276 aa).

The disordered stretch occupies residues 1-23 (MRPDPAPLDPTDASPAQARRHQP). 4 residues coordinate S-adenosyl-L-methionine: glutamate 103, glutamate 128, aspartate 155, and aspartate 178. Residue aspartate 178 is part of the active site. Substrate is bound by residues lysine 182, aspartate 214, and 252 to 255 (TRYE).

This sequence belongs to the class I-like SAM-binding methyltransferase superfamily. TrmB family.

It carries out the reaction guanosine(46) in tRNA + S-adenosyl-L-methionine = N(7)-methylguanosine(46) in tRNA + S-adenosyl-L-homocysteine. Its pathway is tRNA modification; N(7)-methylguanine-tRNA biosynthesis. In terms of biological role, catalyzes the formation of N(7)-methylguanine at position 46 (m7G46) in tRNA. This Cutibacterium acnes (strain DSM 16379 / KPA171202) (Propionibacterium acnes) protein is tRNA (guanine-N(7)-)-methyltransferase.